Consider the following 438-residue polypeptide: Tyrosine--tRNA ligase (438 aa).

An L-tyrosine-binding site is contributed by tyrosine 47. The 'HIGH' region motif lies at 52-61; it reads PTATSLHVGG. Positions 183 and 187 each coordinate L-tyrosine. The 'KMSKS' region motif lies at 243–247; sequence KMGKT. Lysine 246 contributes to the ATP binding site. In terms of domain architecture, S4 RNA-binding spans 370–436; it reads LWIVEALQTA…GKRKYALLKI (67 aa).

Belongs to the class-I aminoacyl-tRNA synthetase family. TyrS type 1 subfamily. In terms of assembly, homodimer.

The protein resides in the cytoplasm. It carries out the reaction tRNA(Tyr) + L-tyrosine + ATP = L-tyrosyl-tRNA(Tyr) + AMP + diphosphate + H(+). Functionally, catalyzes the attachment of tyrosine to tRNA(Tyr) in a two-step reaction: tyrosine is first activated by ATP to form Tyr-AMP and then transferred to the acceptor end of tRNA(Tyr). The polypeptide is Tyrosine--tRNA ligase (Rhodopirellula baltica (strain DSM 10527 / NCIMB 13988 / SH1)).